Reading from the N-terminus, the 427-residue chain is Serine--tRNA ligase (427 aa).

231-233 is a binding site for L-serine; sequence TAE. 262–264 lines the ATP pocket; sequence RSE. Position 285 (Glu-285) interacts with L-serine. 349-352 is an ATP binding site; that stretch reads EISS. L-serine is bound at residue Ser-385.

This sequence belongs to the class-II aminoacyl-tRNA synthetase family. Type-1 seryl-tRNA synthetase subfamily. In terms of assembly, homodimer. The tRNA molecule binds across the dimer.

It localises to the cytoplasm. It carries out the reaction tRNA(Ser) + L-serine + ATP = L-seryl-tRNA(Ser) + AMP + diphosphate + H(+). The catalysed reaction is tRNA(Sec) + L-serine + ATP = L-seryl-tRNA(Sec) + AMP + diphosphate + H(+). The protein operates within aminoacyl-tRNA biosynthesis; selenocysteinyl-tRNA(Sec) biosynthesis; L-seryl-tRNA(Sec) from L-serine and tRNA(Sec): step 1/1. Functionally, catalyzes the attachment of serine to tRNA(Ser). Is also able to aminoacylate tRNA(Sec) with serine, to form the misacylated tRNA L-seryl-tRNA(Sec), which will be further converted into selenocysteinyl-tRNA(Sec). This Sinorhizobium medicae (strain WSM419) (Ensifer medicae) protein is Serine--tRNA ligase.